A 448-amino-acid chain; its full sequence is Phosphoglucosamine mutase (448 aa).

The active-site Phosphoserine intermediate is the Ser-100. Ser-100, Asp-240, Asp-242, and Asp-244 together coordinate Mg(2+). Phosphoserine is present on Ser-100.

It belongs to the phosphohexose mutase family. Mg(2+) serves as cofactor. Post-translationally, activated by phosphorylation.

It catalyses the reaction alpha-D-glucosamine 1-phosphate = D-glucosamine 6-phosphate. In terms of biological role, catalyzes the conversion of glucosamine-6-phosphate to glucosamine-1-phosphate. The protein is Phosphoglucosamine mutase of Alkaliphilus metalliredigens (strain QYMF).